We begin with the raw amino-acid sequence, 586 residues long: Chaperone protein HscA homolog (586 aa).

The protein belongs to the heat shock protein 70 family.

Its function is as follows. Chaperone involved in the maturation of iron-sulfur cluster-containing proteins. Has a low intrinsic ATPase activity which is markedly stimulated by HscB. This Rickettsia typhi (strain ATCC VR-144 / Wilmington) protein is Chaperone protein HscA homolog.